Here is a 349-residue protein sequence, read N- to C-terminus: DNA replication and repair protein RecF (349 aa).

29 to 36 serves as a coordination point for ATP; it reads GLNGVGKT.

It belongs to the RecF family.

It is found in the cytoplasm. Its function is as follows. The RecF protein is involved in DNA metabolism; it is required for DNA replication and normal SOS inducibility. RecF binds preferentially to single-stranded, linear DNA. It also seems to bind ATP. The protein is DNA replication and repair protein RecF of Acholeplasma laidlawii (strain PG-8A).